Reading from the N-terminus, the 261-residue chain is 3-methyl-2-oxobutanoate hydroxymethyltransferase (261 aa).

The Mg(2+) site is built by D42 and D81. Residues 42–43 (DS), D81, and K110 each bind 3-methyl-2-oxobutanoate. E112 contacts Mg(2+). Residue E179 is the Proton acceptor of the active site.

It belongs to the PanB family. As to quaternary structure, homodecamer; pentamer of dimers. The cofactor is Mg(2+).

Its subcellular location is the cytoplasm. The catalysed reaction is 3-methyl-2-oxobutanoate + (6R)-5,10-methylene-5,6,7,8-tetrahydrofolate + H2O = 2-dehydropantoate + (6S)-5,6,7,8-tetrahydrofolate. Its pathway is cofactor biosynthesis; (R)-pantothenate biosynthesis; (R)-pantoate from 3-methyl-2-oxobutanoate: step 1/2. Catalyzes the reversible reaction in which hydroxymethyl group from 5,10-methylenetetrahydrofolate is transferred onto alpha-ketoisovalerate to form ketopantoate. This Thermus thermophilus (strain ATCC 27634 / DSM 579 / HB8) protein is 3-methyl-2-oxobutanoate hydroxymethyltransferase.